A 320-amino-acid chain; its full sequence is MAVVHRILRRGLSAASPLPSLRGLLLVSPQELGRRPASSSSSAAAAAGDVEAELRAAREDVRQLLKSNPCHPILVRLGWHDAGTYDKNITEWPKCGGANGSLRFGVELVHAANKGLLKALFLVIPIKSKYAGVTYADIFQLASATAIEEAGGPKIPMIYGRADVADGEECPPEGRLPAADPPSPAEHLREVFYRMGLSDKEIVALSGAHTLGRARPERSGWGKPETKYTENGPGAPGGQSWTSEWLKFDNSYFKEIKERRDEDLLVLPTDAVLFEDSSFKIHAEKYAEDQDAFFEDYAEAHAKLSNLGAKFDPPKGISLE.

A chloroplast-targeting transit peptide spans methionine 1–serine 42. Residue histidine 80 is the Proton acceptor of the active site. Residue histidine 209 coordinates heme b. K(+) is bound at residue threonine 210. The segment at arginine 213–tryptophan 241 is disordered. The span at alanine 214–tyrosine 228 shows a compositional bias: basic and acidic residues. K(+) is bound by residues threonine 242 and aspartate 249.

This sequence belongs to the peroxidase family. Ascorbate peroxidase subfamily. Requires heme b as cofactor. In terms of tissue distribution, expressed in leaves, stems and flowers.

Its subcellular location is the plastid. The protein localises to the chloroplast stroma. The enzyme catalyses L-ascorbate + H2O2 = L-dehydroascorbate + 2 H2O. In terms of biological role, plays a key role in hydrogen peroxide removal. The chain is Probable L-ascorbate peroxidase 5, chloroplastic from Oryza sativa subsp. japonica (Rice).